An 84-amino-acid chain; its full sequence is Small ribosomal subunit protein bS18 (84 aa).

The protein belongs to the bacterial ribosomal protein bS18 family. Part of the 30S ribosomal subunit. Forms a tight heterodimer with protein bS6.

Binds as a heterodimer with protein bS6 to the central domain of the 16S rRNA, where it helps stabilize the platform of the 30S subunit. The sequence is that of Small ribosomal subunit protein bS18 from Maricaulis maris (strain MCS10) (Caulobacter maris).